The chain runs to 177 residues: Protein-export protein SecB (177 aa).

Residues 1 to 22 (MSDENNSGAAAPEAQNPGQNAA) are disordered. Low complexity predominate over residues 8–22 (GAAAPEAQNPGQNAA).

The protein belongs to the SecB family. As to quaternary structure, homotetramer, a dimer of dimers. One homotetramer interacts with 1 SecA dimer.

The protein resides in the cytoplasm. One of the proteins required for the normal export of preproteins out of the cell cytoplasm. It is a molecular chaperone that binds to a subset of precursor proteins, maintaining them in a translocation-competent state. It also specifically binds to its receptor SecA. This chain is Protein-export protein SecB, found in Paracoccus denitrificans (strain Pd 1222).